Consider the following 398-residue polypeptide: Probable L-tyrosine/L-aspartate decarboxylase (398 aa).

The residue at position 242 (Lys242) is an N6-(pyridoxal phosphate)lysine.

The protein belongs to the group II decarboxylase family. MfnA subfamily. The cofactor is pyridoxal 5'-phosphate.

It carries out the reaction L-tyrosine + H(+) = tyramine + CO2. The catalysed reaction is L-aspartate + H(+) = beta-alanine + CO2. It functions in the pathway cofactor biosynthesis; methanofuran biosynthesis. It participates in cofactor biosynthesis; coenzyme A biosynthesis. Catalyzes the decarboxylation of L-tyrosine to produce tyramine for methanofuran biosynthesis. Can also catalyze the decarboxylation of L-aspartate to produce beta-alanine for coenzyme A (CoA) biosynthesis. In Methanosarcina mazei (strain ATCC BAA-159 / DSM 3647 / Goe1 / Go1 / JCM 11833 / OCM 88) (Methanosarcina frisia), this protein is Probable L-tyrosine/L-aspartate decarboxylase.